A 504-amino-acid chain; its full sequence is Maturase K (504 aa).

This sequence belongs to the intron maturase 2 family. MatK subfamily.

It localises to the plastid. The protein localises to the chloroplast. Usually encoded in the trnK tRNA gene intron. Probably assists in splicing its own and other chloroplast group II introns. This chain is Maturase K, found in Cucumis sativus (Cucumber).